The sequence spans 898 residues: Endoplasmic reticulum metallopeptidase 1 (898 aa).

At M1 the chain carries N-acetylmethionine. Residues 1–59 are disordered; that stretch reads MEWSSESAAVRRHRGTAERREGQAAASHPQREASAQEDARGGGRMRGRTESGGESRGAK. Residues 1 to 66 lie on the Cytoplasmic side of the membrane; the sequence is MEWSSESAAV…GAKTALSEAR (66 aa). Over residues 37 to 57 the composition is skewed to basic and acidic residues; sequence EDARGGGRMRGRTESGGESRG. Residues 67-87 form a helical membrane-spanning segment; that stretch reads TALALALYLLALRALVQLSLQ. Residues 88–393 are Lumenal-facing; that stretch reads RLVLSRTSGL…SSSEYRHGSM (306 aa). N-linked (GlcNAc...) asparagine glycosylation occurs at N176. Cysteines 198 and 216 form a disulfide. Residues H199 and D211 each contribute to the Zn(2+) site. E245 functions as the Proton acceptor in the catalytic mechanism. Residues E246, E272, and H348 each contribute to the Zn(2+) site. The helical transmembrane segment at 394 to 414 threads the bilayer; sequence VFFDVLGLLVIAYPSRVGSII. Over 415-451 the chain is Cytoplasmic; it reads NYMVVMAVVLYLGRKLLRPNHSNSNYVRDFLCGLGIT. Residues 452-472 form a helical membrane-spanning segment; it reads FISWFTSLVTVLIIAVFVSLI. Topologically, residues 473–480 are lumenal; the sequence is GQSLSWYN. Residues 481-501 form a helical membrane-spanning segment; the sequence is YFYIAVCLYGTATVAKIILIH. Topologically, residues 502–515 are cytoplasmic; that stretch reads TLAKRFYYVNASDL. The helical transmembrane segment at 516–538 threads the bilayer; the sequence is YLGELFFDTSLFVHCGFLVALTA. Over 539–542 the chain is Lumenal; that stretch reads QGFC. Residues 543–562 form a helical membrane-spanning segment; the sequence is SAFMSAVWVAFPLLTKLCVY. Topologically, residues 563–573 are cytoplasmic; that stretch reads KDFKKHGAKGR. The helical transmembrane segment at 574-594 threads the bilayer; sequence FIALYLLGMFIPYLYGLYLIW. Over 595-615 the chain is Lumenal; it reads AVFEMFTPILGRSGSEIPPDV. A helical transmembrane segment spans residues 616–636; it reads VLASILAVCVMILSSYFITFI. The Cytoplasmic segment spans residues 637–645; the sequence is YLVNSTKKT. Residues 646 to 666 traverse the membrane as a helical segment; that stretch reads ILTLILVCAVTFLLVCSGAFF. Residues 667-898 lie on the Lumenal side of the membrane; sequence PYSSNPDSPK…WVSTYSLFVF (232 aa). N724 carries N-linked (GlcNAc...) asparagine glycosylation.

The protein belongs to the peptidase M28 family. Zn(2+) is required as a cofactor. In terms of tissue distribution, widely expressed, with highest levels in ovary, kidney, hypothalamus and hippocampus. Within the ovarian follicle, expressed in granulosa cells, but not in oocytes. Present in both preantral and antral follicles, but not in atretic antral follicle.

The protein localises to the endoplasmic reticulum membrane. In terms of biological role, within the ovary, required for the organization of somatic cells and oocytes into discrete follicular structures. The sequence is that of Endoplasmic reticulum metallopeptidase 1 from Rattus norvegicus (Rat).